The sequence spans 304 residues: Homoserine kinase (304 aa).

Residue 90 to 100 (PLARGLGSSAS) coordinates ATP.

This sequence belongs to the GHMP kinase family. Homoserine kinase subfamily.

Its subcellular location is the cytoplasm. The enzyme catalyses L-homoserine + ATP = O-phospho-L-homoserine + ADP + H(+). It participates in amino-acid biosynthesis; L-threonine biosynthesis; L-threonine from L-aspartate: step 4/5. In terms of biological role, catalyzes the ATP-dependent phosphorylation of L-homoserine to L-homoserine phosphate. The sequence is that of Homoserine kinase from Staphylococcus aureus (strain bovine RF122 / ET3-1).